The primary structure comprises 209 residues: UPF0502 protein mll4256 (209 aa).

It belongs to the UPF0502 family.

The chain is UPF0502 protein mll4256 from Mesorhizobium japonicum (strain LMG 29417 / CECT 9101 / MAFF 303099) (Mesorhizobium loti (strain MAFF 303099)).